The chain runs to 92 residues: Small ribosomal subunit protein uS19 (92 aa).

It belongs to the universal ribosomal protein uS19 family.

In terms of biological role, protein S19 forms a complex with S13 that binds strongly to the 16S ribosomal RNA. In Methylobacterium sp. (strain 4-46), this protein is Small ribosomal subunit protein uS19.